A 341-amino-acid polypeptide reads, in one-letter code: Mitochondrial transcription factor 1 (341 aa).

Positions 23, 77, 101, and 137 each coordinate S-adenosyl-L-methionine.

Belongs to the class I-like SAM-binding methyltransferase superfamily. rRNA adenine N(6)-methyltransferase family.

It is found in the mitochondrion intermembrane space. Its function is as follows. Mitochondrial transcription factor that confers selective promoter recognition on the core subunit of the yeast mitochondrial RNA polymerase. Interacts with DNA in a non-specific manner. The chain is Mitochondrial transcription factor 1 (MTF1) from Saccharomyces cerevisiae (strain ATCC 204508 / S288c) (Baker's yeast).